The following is an 83-amino-acid chain: Ferredoxin (83 aa).

2 4Fe-4S ferredoxin-type domains span residues 2–29 and 31–64; these read ALMITDECINCDVCEPECPNGAISQGDE and YVIEPSLCTECVGHYETSQCVEVCPVDCIIKDPS. Residues C9, C12, C15, C19, C38, C41, C50, and C54 each coordinate [4Fe-4S] cluster.

[4Fe-4S] cluster is required as a cofactor.

Its function is as follows. Ferredoxins are iron-sulfur proteins that transfer electrons in a wide variety of metabolic reactions. The sequence is that of Ferredoxin (fdx) from Allochromatium vinosum (strain ATCC 17899 / DSM 180 / NBRC 103801 / NCIMB 10441 / D) (Chromatium vinosum).